The sequence spans 310 residues: Probable manganese-dependent inorganic pyrophosphatase (310 aa).

6 residues coordinate Mn(2+): H9, D13, D15, D76, H98, and D150.

It belongs to the PPase class C family. The cofactor is Mn(2+).

It localises to the cytoplasm. The enzyme catalyses diphosphate + H2O = 2 phosphate + H(+). The chain is Probable manganese-dependent inorganic pyrophosphatase from Streptococcus thermophilus (strain CNRZ 1066).